The following is a 199-amino-acid chain: Nuclear protein UL4 (199 aa).

This sequence belongs to the alphaherpesvirinae HHV-1 UL4 family.

The protein localises to the host nucleus. The protein is Nuclear protein UL4 of Homo sapiens (Human).